The following is a 305-amino-acid chain: Energy-coupling factor transporter ATP-binding protein EcfA2 (305 aa).

Residues 13–262 form the ABC transporter domain; the sequence is LQNVDITFTN…KNLLQELLIE (250 aa). An ATP-binding site is contributed by 55–62; sequence GSTGSGKS.

This sequence belongs to the ABC transporter superfamily. Energy-coupling factor EcfA family. Forms a stable energy-coupling factor (ECF) transporter complex composed of 2 membrane-embedded substrate-binding proteins (S component), 2 ATP-binding proteins (A component) and 2 transmembrane proteins (T component).

It localises to the cell membrane. In terms of biological role, ATP-binding (A) component of a common energy-coupling factor (ECF) ABC-transporter complex. Unlike classic ABC transporters this ECF transporter provides the energy necessary to transport a number of different substrates. This Spiroplasma kunkelii protein is Energy-coupling factor transporter ATP-binding protein EcfA2.